The sequence spans 112 residues: cAMP-regulated phosphoprotein 19 (112 aa).

Residues Met1–Ala11 show a composition bias toward low complexity. The disordered stretch occupies residues Met1 to Leu49. Over residues Glu12–Leu32 the composition is skewed to basic and acidic residues. Phosphoserine; by GWL occurs at positions 62 and 104. Positions Met72–Gly112 are disordered. Ser104 carries the post-translational modification Phosphoserine; by PKA.

Belongs to the endosulfine family. Interacts (when phosphorylated at Ser-62) with PPP2R2D. Phosphorylation at Ser-62 by MASTL/GWL during mitosis is essential for interaction with PPP2R2D (PR55-delta) and subsequent inactivation of PP2A.

It is found in the cytoplasm. Functionally, protein phosphatase inhibitor that specifically inhibits protein phosphatase 2A (PP2A) during mitosis. Inhibition of PP2A is enhanced when ARPP19 is phosphorylated. When phosphorylated at Ser-62 during mitosis, specifically interacts with PPP2R2D (PR55-delta) and inhibits its activity, leading to inactivation of PP2A, an essential condition to keep cyclin-B1-CDK1 activity high during M phase. This Taeniopygia guttata (Zebra finch) protein is cAMP-regulated phosphoprotein 19 (ARPP19).